The chain runs to 1616 residues: Myosin-IIIa (1616 aa).

The region spanning 21-287 is the Protein kinase domain; that stretch reads WEITETIGKG…VSELLQHKFI (267 aa). Residues 27 to 35 and K50 each bind ATP; that span reads IGKGTYGKV. Catalysis depends on D150, which acts as the Proton acceptor. The region spanning 338 to 1053 is the Myosin motor domain; the sequence is KDVDDLATLE…HVEQLNLMRK (716 aa). The tract at residues 934 to 956 is actin-binding; sequence LMDLLSKMVVGQPHFVRCIKPNS. IQ domains follow at residues 1055 to 1084, 1082 to 1111, and 1346 to 1375; these read AIDK…KRKE, RKES…MKNT, and EDKA…SSFK. The tract at residues 1401 to 1479 is interaction with MORN4; sequence EEINNIKKKD…RRVSSQQCLS (79 aa). 2 disordered regions span residues 1545 to 1567 and 1581 to 1616; these read LPSR…QQEL and AESP…VQQS. Basic and acidic residues-rich tracts occupy residues 1550–1564 and 1583–1592; these read GPKE…RRPQ and SPEKEEEREP. Residues 1602–1616 show a composition bias toward basic residues; sequence LLRKTSQRRRLVQQS.

The protein in the C-terminal section; belongs to the TRAFAC class myosin-kinesin ATPase superfamily. Myosin family. In the N-terminal section; belongs to the protein kinase superfamily. STE Ser/Thr protein kinase family. Interacts with MORN4. Interacts (via C-terminus) with ESPN and ESPNL. As to expression, strongest expression in retina, retinal pigment epithelial cells, cochlea and pancreas.

The protein localises to the cytoplasm. It is found in the cytoskeleton. The protein resides in the cell projection. Its subcellular location is the filopodium tip. It localises to the stereocilium. It catalyses the reaction L-seryl-[protein] + ATP = O-phospho-L-seryl-[protein] + ADP + H(+). The catalysed reaction is L-threonyl-[protein] + ATP = O-phospho-L-threonyl-[protein] + ADP + H(+). It carries out the reaction ATP + H2O = ADP + phosphate + H(+). Actin-dependent motor protein with a protein kinase activity, playing an essential role in hearing. Probably also plays a role in vision. Required for normal cochlear hair bundle development and hearing. Plays an important role in the early steps of cochlear hair bundle morphogenesis. Influences the number and lengths of stereocilia to be produced and limits the growth of microvilli within the forming auditory hair bundles thereby contributing to the architecture of the hair bundle, including its staircase pattern. Involved in the elongation of actin in stereocilia tips by transporting the actin regulatory factor ESPN to the plus ends of actin filaments. In Homo sapiens (Human), this protein is Myosin-IIIa (MYO3A).